The sequence spans 168 residues: Phosphopantetheine adenylyltransferase (168 aa).

Residue T17 coordinates substrate. ATP contacts are provided by residues 17–18 (TF) and H25. Substrate-binding residues include K49, L81, and R95. ATP-binding positions include 96–98 (GLR), E106, and 131–137 (LMYISST).

Belongs to the bacterial CoaD family. As to quaternary structure, homohexamer. Requires Mg(2+) as cofactor.

It is found in the cytoplasm. It carries out the reaction (R)-4'-phosphopantetheine + ATP + H(+) = 3'-dephospho-CoA + diphosphate. Its pathway is cofactor biosynthesis; coenzyme A biosynthesis; CoA from (R)-pantothenate: step 4/5. In terms of biological role, reversibly transfers an adenylyl group from ATP to 4'-phosphopantetheine, yielding dephospho-CoA (dPCoA) and pyrophosphate. This chain is Phosphopantetheine adenylyltransferase, found in Legionella pneumophila (strain Paris).